The sequence spans 80 residues: Putative membrane protein insertion efficiency factor (80 aa).

The protein belongs to the UPF0161 family.

It is found in the cell inner membrane. Functionally, could be involved in insertion of integral membrane proteins into the membrane. The protein is Putative membrane protein insertion efficiency factor of Picosynechococcus sp. (strain ATCC 27264 / PCC 7002 / PR-6) (Agmenellum quadruplicatum).